The sequence spans 553 residues: Dihydroxy-acid dehydratase (553 aa).

Aspartate 78 is a Mg(2+) binding site. Residue cysteine 119 participates in [2Fe-2S] cluster binding. 2 residues coordinate Mg(2+): aspartate 120 and lysine 121. Lysine 121 carries the N6-carboxylysine modification. Residue cysteine 193 coordinates [2Fe-2S] cluster. Glutamate 441 provides a ligand contact to Mg(2+). Serine 467 (proton acceptor) is an active-site residue.

Belongs to the IlvD/Edd family. In terms of assembly, homodimer. The cofactor is [2Fe-2S] cluster. Mg(2+) serves as cofactor.

It catalyses the reaction (2R)-2,3-dihydroxy-3-methylbutanoate = 3-methyl-2-oxobutanoate + H2O. The catalysed reaction is (2R,3R)-2,3-dihydroxy-3-methylpentanoate = (S)-3-methyl-2-oxopentanoate + H2O. Its pathway is amino-acid biosynthesis; L-isoleucine biosynthesis; L-isoleucine from 2-oxobutanoate: step 3/4. It participates in amino-acid biosynthesis; L-valine biosynthesis; L-valine from pyruvate: step 3/4. Its function is as follows. Functions in the biosynthesis of branched-chain amino acids. Catalyzes the dehydration of (2R,3R)-2,3-dihydroxy-3-methylpentanoate (2,3-dihydroxy-3-methylvalerate) into 2-oxo-3-methylpentanoate (2-oxo-3-methylvalerate) and of (2R)-2,3-dihydroxy-3-methylbutanoate (2,3-dihydroxyisovalerate) into 2-oxo-3-methylbutanoate (2-oxoisovalerate), the penultimate precursor to L-isoleucine and L-valine, respectively. The sequence is that of Dihydroxy-acid dehydratase from Geobacter sp. (strain M21).